We begin with the raw amino-acid sequence, 288 residues long: Glucose-1-phosphate thymidylyltransferase (288 aa).

Residue glycine 8 coordinates dTDP-alpha-D-glucose. Positions 8, 11, 12, 13, 23, 24, 80, 85, and 108 each coordinate dTTP. The dTDP-alpha-D-glucose site is built by lysine 23, glutamine 24, glutamine 80, glycine 85, aspartate 108, asparagine 109, glycine 143, glutamate 158, lysine 159, valine 169, and aspartate 222. Position 108 (aspartate 108) interacts with Mg(2+). Position 222 (aspartate 222) interacts with Mg(2+).

This sequence belongs to the glucose-1-phosphate thymidylyltransferase family. It depends on Mg(2+) as a cofactor.

It catalyses the reaction dTTP + alpha-D-glucose 1-phosphate + H(+) = dTDP-alpha-D-glucose + diphosphate. It participates in carbohydrate biosynthesis; dTDP-L-rhamnose biosynthesis. Catalyzes the conversion of glucose-1-phosphate and dTTP to dTDP-glucose and pyrophosphate. Involved in the biosynthesis of the dTDP-L-rhamnose which is a component of the critical linker, D-N-acetylglucosamine-L-rhamnose disaccharide, which connects the galactan region of arabinogalactan to peptidoglycan via a phosphodiester linkage. This is Glucose-1-phosphate thymidylyltransferase (rmlA) from Mycobacterium tuberculosis (strain CDC 1551 / Oshkosh).